The following is a 178-amino-acid chain: Probable chorismate pyruvate-lyase (178 aa).

Positions 73, 111, and 163 each coordinate substrate.

It belongs to the UbiC family.

It localises to the cytoplasm. The enzyme catalyses chorismate = 4-hydroxybenzoate + pyruvate. It functions in the pathway cofactor biosynthesis; ubiquinone biosynthesis. Functionally, removes the pyruvyl group from chorismate, with concomitant aromatization of the ring, to provide 4-hydroxybenzoate (4HB) for the ubiquinone pathway. The sequence is that of Probable chorismate pyruvate-lyase from Pseudomonas aeruginosa (strain UCBPP-PA14).